A 310-amino-acid polypeptide reads, in one-letter code: Ferredoxin--NADP reductase (310 aa).

Residues D26, Q34, Y39, V78, F108, D268, and T308 each coordinate FAD.

It belongs to the ferredoxin--NADP reductase type 2 family. As to quaternary structure, homodimer. FAD serves as cofactor.

The catalysed reaction is 2 reduced [2Fe-2S]-[ferredoxin] + NADP(+) + H(+) = 2 oxidized [2Fe-2S]-[ferredoxin] + NADPH. The sequence is that of Ferredoxin--NADP reductase from Lactobacillus helveticus (strain DPC 4571).